The sequence spans 906 residues: Patched domain-containing protein 3 (906 aa).

The interval 1 to 70 is disordered; sequence MISSKVAPGE…LGQEAPPPRR (70 aa). Asn148 and Asn235 each carry an N-linked (GlcNAc...) asparagine glycan. The next 11 helical transmembrane spans lie at 338 to 358, 370 to 390, 392 to 412, 442 to 462, 476 to 496, 559 to 579, 760 to 780, 782 to 802, 814 to 834, 848 to 868, and 883 to 903; these read TVIP…VVSC, VAVF…GLML, LGVP…GVGV, VAVS…TGIT, GTTL…VMAL, FIVV…CFQV, VMIA…HPVC, LWVT…MAFW, LVIC…AFVS, LYLL…GVCV, and IMFL…PVFL. The region spanning 339–496 is the SSD domain; the sequence is VIPLFHLAYI…ITCFGAVMAL (158 aa).

This sequence belongs to the patched family. Expressed in germ cells of the testis (at protein level).

The protein localises to the cell projection. The protein resides in the cilium. It is found in the flagellum membrane. It localises to the endoplasmic reticulum membrane. In terms of biological role, may play a role in sperm development or sperm function. However, does not appear to have an essential role in spermatogenesis or male fertility. The polypeptide is Patched domain-containing protein 3 (Ptchd3) (Mus musculus (Mouse)).